A 416-amino-acid polypeptide reads, in one-letter code: STAM-binding protein-like (416 aa).

The disordered stretch occupies residues 214–244 (SYGTVQPHPPAVDRSLKPSSYGSNSSGVTSD). A compositionally biased stretch (low complexity) spans 230-243 (KPSSYGSNSSGVTS). The 132-residue stretch at 249-380 (VKIPRDVCCK…LTDYGMKEIG (132 aa)) folds into the MPN domain. The Zn(2+) site is built by His-327, His-329, Asp-340, His-342, Cys-382, His-388, and His-390. Residues 327-340 (HTHPTQTAFLSSVD) carry the JAMM motif motif.

This sequence belongs to the peptidase M67C family. Zn(2+) serves as cofactor.

Zinc metalloprotease that specifically cleaves 'Lys-63'-linked polyubiquitin chains. Does not cleave 'Lys-48'-linked polyubiquitin chains. Functions at the endosome and is able to oppose the ubiquitin-dependent sorting of receptors to lysosomes. This chain is STAM-binding protein-like (stambp), found in Xenopus laevis (African clawed frog).